We begin with the raw amino-acid sequence, 152 residues long: SsrA-binding protein (152 aa).

The protein belongs to the SmpB family.

It localises to the cytoplasm. Its function is as follows. Required for rescue of stalled ribosomes mediated by trans-translation. Binds to transfer-messenger RNA (tmRNA), required for stable association of tmRNA with ribosomes. tmRNA and SmpB together mimic tRNA shape, replacing the anticodon stem-loop with SmpB. tmRNA is encoded by the ssrA gene; the 2 termini fold to resemble tRNA(Ala) and it encodes a 'tag peptide', a short internal open reading frame. During trans-translation Ala-aminoacylated tmRNA acts like a tRNA, entering the A-site of stalled ribosomes, displacing the stalled mRNA. The ribosome then switches to translate the ORF on the tmRNA; the nascent peptide is terminated with the 'tag peptide' encoded by the tmRNA and targeted for degradation. The ribosome is freed to recommence translation, which seems to be the essential function of trans-translation. The chain is SsrA-binding protein from Rickettsia canadensis (strain McKiel).